The primary structure comprises 178 residues: MADLATIARPYAEALFQSAKPAELAGCLEQLNELAQLAALPEVAALSNNPKVSADDLSKLLSGMVKTKLDPKVASFLNLVNQNHRLVAVPEIAHQFEAMKNKSEGAAEVNITSAFPLEGSALNDLLSSLKKRFGGKELRPTIQVDPTLIGGVRIQVGDEVMDSSVKVQLAQMQASLGA.

Belongs to the ATPase delta chain family. As to quaternary structure, F-type ATPases have 2 components, F(1) - the catalytic core - and F(0) - the membrane proton channel. F(1) has five subunits: alpha(3), beta(3), gamma(1), delta(1), epsilon(1). F(0) has three main subunits: a(1), b(2) and c(10-14). The alpha and beta chains form an alternating ring which encloses part of the gamma chain. F(1) is attached to F(0) by a central stalk formed by the gamma and epsilon chains, while a peripheral stalk is formed by the delta and b chains.

Its subcellular location is the cell inner membrane. F(1)F(0) ATP synthase produces ATP from ADP in the presence of a proton or sodium gradient. F-type ATPases consist of two structural domains, F(1) containing the extramembraneous catalytic core and F(0) containing the membrane proton channel, linked together by a central stalk and a peripheral stalk. During catalysis, ATP synthesis in the catalytic domain of F(1) is coupled via a rotary mechanism of the central stalk subunits to proton translocation. In terms of biological role, this protein is part of the stalk that links CF(0) to CF(1). It either transmits conformational changes from CF(0) to CF(1) or is implicated in proton conduction. This Polynucleobacter necessarius subsp. necessarius (strain STIR1) protein is ATP synthase subunit delta.